We begin with the raw amino-acid sequence, 173 residues long: Development-specific protein S (173 aa).

Beta/gamma crystallin 'Greek key' domains lie at 2 to 46 (ANIT…KVPP) and 48 to 86 (VKAI…RVIS). Tyr8, Asn37, Thr38, Ser40, Gln54, Asn77, Asn78, and Ser80 together coordinate Ca(2+). Positions 87-90 (VPVQ) are connecting peptide. 2 consecutive Beta/gamma crystallin 'Greek key' domains span residues 91–135 (PRAR…KPQG) and 136–173 (LAVV…IRIS).

Belongs to the beta/gamma-crystallin family.

Its function is as follows. Protein S, induced in large amounts during fruiting body formation, assembles on the surface of myxospores in the presence of calcium ions. The polypeptide is Development-specific protein S (tps) (Myxococcus xanthus).